The primary structure comprises 1339 residues: Aldehyde oxidase 1 (1339 aa).

Residues 5 to 92 (SELLFYVNGR…GAAVTTVEGI (88 aa)) form the 2Fe-2S ferredoxin-type domain. [2Fe-2S] cluster-binding residues include Cys44, Cys49, Cys52, and Cys74. Gln113 lines the Mo-molybdopterin pocket. Positions 114, 117, 149, and 151 each coordinate [2Fe-2S] cluster. Cys151 is a Mo-molybdopterin binding site. In terms of domain architecture, FAD-binding PCMH-type spans 236–421 (FGSDRMTWIS…ISVNIPYSRK (186 aa)). Residues 264–271 (VVMGNTSV), Ala345, Ser354, His358, Asp367, and Leu411 contribute to the FAD site. Residues 807 to 808 (AF) and Met1048 contribute to the Mo-molybdopterin site. Phosphoserine is present on Ser1069. Mo-molybdopterin-binding positions include 1089-1092 (GSVV), Gln1204, and Leu1269. Glu1271 functions as the Proton acceptor; for azaheterocycle hydroxylase activity in the catalytic mechanism.

This sequence belongs to the xanthine dehydrogenase family. Homodimer. The cofactor is [2Fe-2S] cluster. FAD is required as a cofactor. Requires Mo-molybdopterin as cofactor. The N-terminus is blocked. In terms of tissue distribution, expressed at high levels in liver, lung and spleen. Also expressed in kindey, eye, testis, duodenum, esophagus and thymus (at protein level).

The protein resides in the cytoplasm. It catalyses the reaction an aldehyde + O2 + H2O = a carboxylate + H2O2 + H(+). It carries out the reaction retinal + O2 + H2O = retinoate + H2O2 + H(+). Oxidase with broad substrate specificity, oxidizing aromatic azaheterocycles, such as N1-methylnicotinamide, N-methylphthalazinium and phthalazine, as well as aldehydes, such as benzaldehyde, retinal, pyridoxal, and vanillin. Plays a key role in the metabolism of xenobiotics and drugs containing aromatic azaheterocyclic substituents. Is probably involved in the regulation of reactive oxygen species homeostasis. May be a prominent source of superoxide generation via the one-electron reduction of molecular oxygen. May also catalyze nitric oxide (NO) production via the reduction of nitrite to NO with NADH or aldehyde as electron donor. May play a role in adipogenesis. The polypeptide is Aldehyde oxidase 1 (Bos taurus (Bovine)).